We begin with the raw amino-acid sequence, 140 residues long: Large-conductance mechanosensitive channel (140 aa).

3 helical membrane passes run 14 to 34 (VLDL…VKSL), 37 to 57 (YLIN…DWVL), and 66 to 86 (FGSF…VFIL).

This sequence belongs to the MscL family. Homopentamer.

The protein resides in the cell membrane. Channel that opens in response to stretch forces in the membrane lipid bilayer. May participate in the regulation of osmotic pressure changes within the cell. This chain is Large-conductance mechanosensitive channel, found in Pediococcus pentosaceus (strain ATCC 25745 / CCUG 21536 / LMG 10740 / 183-1w).